We begin with the raw amino-acid sequence, 632 residues long: Chaperone protein DnaK (632 aa).

A Phosphothreonine; by autocatalysis modification is found at T198.

Belongs to the heat shock protein 70 family.

Acts as a chaperone. This chain is Chaperone protein DnaK, found in Rhodopseudomonas palustris (strain BisB18).